Consider the following 199-residue polypeptide: MSEEHHYKVHSRVLRWMKSAERIKRELDEGYEKKWRGKSVEEIKEQKKVHDIVEILELLKSKECDRFFFRTGKYMKGGSERWKMVANGILEEGGEKKVGKVEVGLFKGERGGSVVYHLMFRPTETERAGMVGGSSFGKGDDVDEIKKEESSDMSGFRYPPGVRCEMTSNGNEFRIEYRNPKNTSEVLRTLTILRIPEIR.

It belongs to the UPF0329 family.

This Encephalitozoon cuniculi (strain GB-M1) (Microsporidian parasite) protein is UPF0329 protein ECU01_0120/ECU01_1490/ECU08_0050.